The following is a 949-amino-acid chain: MSINHEIYYILVFEHRSVAIKLIIVVIVLLQFFLARSRQIDRTWAHTNRKERFREMTAIGNTDDALDTSTAASKENGKGRLRVQKACELCKKRKVKCDGNNPCLNCSKHQKECRYDFKATNRKRRRRQVASAVRDVSKTYAETSESFPRDLLSKSNIIINAPSDGVSSSASNSPNPNSHYHHISSTLPFMSGRPNHTFHSGSNLNGENNNNSFPEDHMAKLLLQLSSKLGNTTKESSIRTTRTNASDVNANPTVVNMKNSQEDCDTNHRSAICDSAEALHNNNINSKENKIINSQITNTVNDHFESPWQTFSLDKYRFHRRYQNILPYYLGVSILKDLSPQTIEYAKLKRPRVQNYGWNLSGGHYLKYKGDFRSQEKNIRHESKFFDFDDPVHLSLINKLLRYYFDEINPVFSIIHEATFWQQYNNKFLRQGKQNNSSANLFTSMLYLILSTTLRFREGHLDGQKGQGTYSNTSLNITFEEKSILIKKPSIEENLFKYAYLIINTLTFEWESFELIQSWLLITFYFRTCYRQTACWNALSQAVNMCNGMSLYLNKFPEIHSTYDESKAWHCFWCCFIMDKLISFQMGRFYQLSLPASEMCEQMNLVKSKKFLQEEDDWFHEETFQMLDLSIIVTQFLKRDAQDLNLNETVQLRSQLGQWYDTFIVGSQTNAYDDNYRYFYQVQPFMTYLDIRLTFEVRQLFCLIAPSSTANNKSLEYVVDTELLISHCQMAIENLAEITRSNLFFVPWWLNLSQLFTVNLICIIYLHAGIAVTQNKAIMQSCQEIWRTLECSKPKNRPSMLPECLWCLKMLNHMFCIRLRDSALQLEATLGTDHGDDTPNRNKFEQFKKVGDNDADVEVDAGEREENADERQENPHNNSKRVPLATRSHNTTNFDGSIAISPESAVANLGTDTGLPSDVLDTVSKIGNSPNVFDDDLFSNLLWFDQNFA.

Residues 87-113 (CELCKKRKVKCDGNNPCLNCSKHQKEC) constitute a DNA-binding region (zn(2)-C6 fungal-type). 2 stretches are compositionally biased toward low complexity: residues 164–178 (DGVSSSASNSPNPNS) and 200–212 (SGSNLNGENNNNS). Disordered stretches follow at residues 164–214 (DGVS…NSFP) and 862–888 (GEREENADERQENPHNNSKRVPLATRS). The span at 862-874 (GEREENADERQEN) shows a compositional bias: basic and acidic residues.

It is found in the nucleus. In terms of biological role, binds to SIN3. This Saccharomyces cerevisiae (strain ATCC 204508 / S288c) (Baker's yeast) protein is Probable transcriptional regulatory protein STB4 (STB4).